The primary structure comprises 806 residues: DEP domain-containing protein 1A (806 aa).

Residues 24–108 enclose the DEP domain; it reads FRAAMPLRKH…DNNSLYRFPS (85 aa). The disordered stretch occupies residues 142–177; that stretch reads QFSKKTPKRRASVDSKEEQENEDLMEDQRNDDDFPK. Basic and acidic residues predominate over residues 167–177; the sequence is EDQRNDDDFPK. Positions 279 to 319 constitute a Rho-GAP domain; the sequence is DYFLNLPEPLLTFEFYELFVNILVVCGYITVPNSHNGKHRF. A disordered region spans residues 564-588; that stretch reads SHSSFPSTSSLLPPTTSPNSTGSES.

The protein is DEP domain-containing protein 1A (depdc1a) of Xenopus laevis (African clawed frog).